Here is a 138-residue protein sequence, read N- to C-terminus: Putative pre-16S rRNA nuclease (138 aa).

It belongs to the YqgF nuclease family.

The protein localises to the cytoplasm. Could be a nuclease involved in processing of the 5'-end of pre-16S rRNA. The polypeptide is Putative pre-16S rRNA nuclease (Porphyromonas gingivalis (strain ATCC BAA-308 / W83)).